A 91-amino-acid polypeptide reads, in one-letter code: MAHKKGQGSSRNGRDSNPQYRGVKVYGGETVSAGSILVRQVGTVIHAGANVKLGRDFTLYSVVDGVVKYERLGRDRKKVSVYPAAAEQASA.

Positions 1–22 are disordered; it reads MAHKKGQGSSRNGRDSNPQYRG. Residues 7 to 19 are compositionally biased toward polar residues; the sequence is QGSSRNGRDSNPQ.

Belongs to the bacterial ribosomal protein bL27 family.

In Myxococcus xanthus (strain DK1622), this protein is Large ribosomal subunit protein bL27.